We begin with the raw amino-acid sequence, 425 residues long: Polyribonucleotide 5'-hydroxyl-kinase Clp1 (425 aa).

ATP is bound by residues glutamate 22, lysine 62, and aspartate 124–threonine 129.

The protein belongs to the Clp1 family. Clp1 subfamily. As to quaternary structure, component of the tRNA splicing endonuclease complex, composed of CLP1, TSEN2, TSEN15, TSEN34 and TSEN54. Component of pre-mRNA cleavage complex II (CF-II). Also associates with numerous components of the pre-mRNA cleavage complex I (CF-I/CFIm), including NUDT21, CPSF2, CPSF3, CPSF6 and CPSF7. Interacts with CSTF2 and SYMPK. Mg(2+) serves as cofactor. Requires Mn(2+) as cofactor. It depends on Ni(2+) as a cofactor.

It localises to the nucleus. The enzyme catalyses a 5'-end dephospho-2'-deoxyribonucleoside-DNA + ATP = a 5'-end 5'-phospho-2'-deoxyribonucleoside-DNA + ADP + H(+). It catalyses the reaction a 5'-end dephospho-ribonucleoside-RNA + ATP = a 5'-end 5'-phospho-ribonucleoside-RNA + ADP + H(+). In terms of biological role, polynucleotide kinase that can phosphorylate the 5'-hydroxyl groups of double-stranded RNA (dsRNA), single-stranded RNA (ssRNA), double-stranded DNA (dsDNA) and double-stranded DNA:RNA hybrids. dsRNA is phosphorylated more efficiently than dsDNA, and the RNA component of a DNA:RNA hybrid is phosphorylated more efficiently than the DNA component. Plays a key role in both tRNA splicing and mRNA 3'-end formation. Component of the tRNA splicing endonuclease complex: phosphorylates the 5'-terminus of the tRNA 3'-exon during tRNA splicing; this phosphorylation event is a prerequisite for the subsequent ligation of the two exon halves and the production of a mature tRNA. Its role in tRNA splicing and maturation is required for cerebellar development. Component of the pre-mRNA cleavage complex II (CF-II), which seems to be required for mRNA 3'-end formation. Also phosphorylates the 5'-terminus of exogenously introduced short interfering RNAs (siRNAs), which is a necessary prerequisite for their incorporation into the RNA-induced silencing complex (RISC). However, endogenous siRNAs and microRNAs (miRNAs) that are produced by the cleavage of dsRNA precursors by DICER1 already contain a 5'-phosphate group, so this protein may be dispensible for normal RNA-mediated gene silencing. This Homo sapiens (Human) protein is Polyribonucleotide 5'-hydroxyl-kinase Clp1.